Consider the following 281-residue polypeptide: Protease HtpX homolog (281 aa).

Helical transmembrane passes span 6-26 (VWLL…AIGG) and 28-48 (SGAL…YYYS). His-130 serves as a coordination point for Zn(2+). Residue Glu-131 is part of the active site. Residue His-134 coordinates Zn(2+). 2 consecutive transmembrane segments (helical) span residues 140–160 (VLIG…SNIV) and 181–201 (IASL…QLAI). A Zn(2+)-binding site is contributed by Glu-206.

The protein belongs to the peptidase M48B family. Zn(2+) serves as cofactor.

It is found in the cell membrane. This Pelotomaculum thermopropionicum (strain DSM 13744 / JCM 10971 / SI) protein is Protease HtpX homolog.